Consider the following 338-residue polypeptide: Phosphoribosylformylglycinamidine cyclo-ligase (338 aa).

It belongs to the AIR synthase family.

The protein localises to the cytoplasm. The enzyme catalyses 2-formamido-N(1)-(5-O-phospho-beta-D-ribosyl)acetamidine + ATP = 5-amino-1-(5-phospho-beta-D-ribosyl)imidazole + ADP + phosphate + H(+). The protein operates within purine metabolism; IMP biosynthesis via de novo pathway; 5-amino-1-(5-phospho-D-ribosyl)imidazole from N(2)-formyl-N(1)-(5-phospho-D-ribosyl)glycinamide: step 2/2. The protein is Phosphoribosylformylglycinamidine cyclo-ligase of Lactococcus lactis subsp. lactis (strain IL1403) (Streptococcus lactis).